Consider the following 394-residue polypeptide: DNA replication and repair protein RecF (394 aa).

30–37 (GPNAAGKT) contacts ATP.

It belongs to the RecF family.

It localises to the cytoplasm. Its function is as follows. The RecF protein is involved in DNA metabolism; it is required for DNA replication and normal SOS inducibility. RecF binds preferentially to single-stranded, linear DNA. It also seems to bind ATP. The chain is DNA replication and repair protein RecF from Roseiflexus castenholzii (strain DSM 13941 / HLO8).